Reading from the N-terminus, the 94-residue chain is Ferredoxin-like protein (94 aa).

4Fe-4S ferredoxin-type domains follow at residues 20-52 (PHIR…RETN) and 53-83 (GKVT…WEWP).

This sequence to ferredoxins from P.putida and C.tartarivorum, ferredoxin I from A.vinelandii, ferredoxin II from D.desulfuricans.

Could be a 3Fe-4S cluster-containing protein. This Azotobacter vinelandii protein is Ferredoxin-like protein (fixX).